A 132-amino-acid chain; its full sequence is Small ribosomal subunit protein uS8 (132 aa).

The protein belongs to the universal ribosomal protein uS8 family. In terms of assembly, part of the 30S ribosomal subunit. Contacts proteins S5 and S12.

One of the primary rRNA binding proteins, it binds directly to 16S rRNA central domain where it helps coordinate assembly of the platform of the 30S subunit. This chain is Small ribosomal subunit protein uS8, found in Leptospira biflexa serovar Patoc (strain Patoc 1 / Ames).